Here is a 320-residue protein sequence, read N- to C-terminus: Nicotianamine synthase 2 (320 aa).

This sequence belongs to the nicotianamine synthase (NAS)-like family.

The enzyme catalyses 3 S-adenosyl-L-methionine = nicotianamine + 3 S-methyl-5'-thioadenosine + 3 H(+). Its function is as follows. Synthesizes nicotianamine, a polyamine which serves as a sensor for the physiological iron status within the plant, and/or might be involved in the transport of iron. The protein is Nicotianamine synthase 2 (NAS2) of Arabidopsis thaliana (Mouse-ear cress).